A 566-amino-acid chain; its full sequence is Type 3 secretion system secretin (566 aa).

The first 22 residues, 1 to 22 (MKKFNIKSLTLLIVLLPLIVNA), serve as a signal peptide directing secretion.

This sequence belongs to the bacterial secretin family. T3SS SctC subfamily. In terms of assembly, the core secretion machinery of the T3SS is composed of approximately 20 different proteins, including cytoplasmic components, a base, an export apparatus and a needle. This subunit is part of the base, which anchors the injectisome in the bacterial cell envelope. Forms a stable homooligomeric complex. Interacts with the pilotin MxiM/SctG and the inner membrane ring outer protein MxiJ/SctJ.

Its subcellular location is the cell outer membrane. Component of the type III secretion system (T3SS), also called injectisome, which is used to inject bacterial effector proteins into eukaryotic host cells. Forms a ring-shaped multimeric structure with an apparent central pore in the outer membrane. Necessary for the secretion of Ipa invasins. In Shigella flexneri, this protein is Type 3 secretion system secretin.